A 485-amino-acid chain; its full sequence is Inosine-5'-monophosphate dehydrogenase (485 aa).

CBS domains lie at 99-154 (IVED…TVKE) and 156-212 (MTRE…KNAV). Residues D247 and 294-296 (GIG) contribute to the NAD(+) site. The K(+) site is built by G296 and G298. S299 lines the IMP pocket. K(+) is bound at residue C301. The active-site Thioimidate intermediate is C301. IMP contacts are provided by residues 334–336 (DGG), 357–358 (GN), and 381–385 (YRGMG). R397 (proton acceptor) is an active-site residue. E412 contributes to the IMP binding site. 3 residues coordinate K(+): E466, S467, and H468.

Belongs to the IMPDH/GMPR family. In terms of assembly, homotetramer. Requires K(+) as cofactor.

It carries out the reaction IMP + NAD(+) + H2O = XMP + NADH + H(+). It functions in the pathway purine metabolism; XMP biosynthesis via de novo pathway; XMP from IMP: step 1/1. With respect to regulation, mycophenolic acid (MPA) is a non-competitive inhibitor that prevents formation of the closed enzyme conformation by binding to the same site as the amobile flap. In contrast, mizoribine monophosphate (MZP) is a competitive inhibitor that induces the closed conformation. MPA is a potent inhibitor of mammalian IMPDHs but a poor inhibitor of the bacterial enzymes. MZP is a more potent inhibitor of bacterial IMPDH. Functionally, catalyzes the conversion of inosine 5'-phosphate (IMP) to xanthosine 5'-phosphate (XMP), the first committed and rate-limiting step in the de novo synthesis of guanine nucleotides, and therefore plays an important role in the regulation of cell growth. The polypeptide is Inosine-5'-monophosphate dehydrogenase (Pyrococcus furiosus (strain ATCC 43587 / DSM 3638 / JCM 8422 / Vc1)).